The primary structure comprises 495 residues: Ribose import ATP-binding protein RbsA 3 (495 aa).

ABC transporter domains are found at residues 5–240 (VRLR…VGRE) and 250–492 (AEIG…TGVK). ATP is bound at residue 37-44 (GENGAGKS).

It belongs to the ABC transporter superfamily. Ribose importer (TC 3.A.1.2.1) family. As to quaternary structure, the complex is composed of an ATP-binding protein (RbsA), two transmembrane proteins (RbsC) and a solute-binding protein (RbsB).

The protein localises to the cell membrane. The catalysed reaction is D-ribose(out) + ATP + H2O = D-ribose(in) + ADP + phosphate + H(+). In terms of biological role, part of the ABC transporter complex RbsABC involved in ribose import. Responsible for energy coupling to the transport system. This Rubrobacter xylanophilus (strain DSM 9941 / JCM 11954 / NBRC 16129 / PRD-1) protein is Ribose import ATP-binding protein RbsA 3.